Here is a 142-residue protein sequence, read N- to C-terminus: Large ribosomal subunit protein uL11 (142 aa).

The protein belongs to the universal ribosomal protein uL11 family. As to quaternary structure, part of the ribosomal stalk of the 50S ribosomal subunit. Interacts with L10 and the large rRNA to form the base of the stalk. L10 forms an elongated spine to which L12 dimers bind in a sequential fashion forming a multimeric L10(L12)X complex. One or more lysine residues are methylated.

Functionally, forms part of the ribosomal stalk which helps the ribosome interact with GTP-bound translation factors. This chain is Large ribosomal subunit protein uL11, found in Bradyrhizobium diazoefficiens (strain JCM 10833 / BCRC 13528 / IAM 13628 / NBRC 14792 / USDA 110).